A 623-amino-acid chain; its full sequence is Quinoprotein ethanol dehydrogenase (623 aa).

Positions 1 to 34 (MTIRSLPAALSPLSMAVQAVLLVSSLALAPAANA) are cleaved as a signal peptide. Residues Asp45 and Asn51 each coordinate Ca(2+). Glu95 contributes to the pyrroloquinoline quinone binding site. Cys139 and Cys140 are disulfide-bonded. Pyrroloquinoline quinone contacts are provided by residues Arg145, Thr189, and 207-209 (HGS). Position 213 (Glu213) interacts with Ca(2+). Positions 242–279 (GRLNGKDSTPTGDVKAPSWPDDPTTETGKVESWSHGGG) are disordered. Ca(2+)-binding residues include Asn300 and Asp350. Asp350 acts as the Proton acceptor in catalysis. Arg378 is a binding site for pyrroloquinoline quinone. The interval 414–436 (RPVENEGQRPAKPLPGETKGKPV) is disordered. WD repeat units follow at residues 515 to 556 (EHNE…ELWK) and 559 to 601 (TGSG…LTKP). Pyrroloquinoline quinone contacts are provided by Trp523 and Ala587.

Belongs to the bacterial PQQ dehydrogenase family. Homodimer. The cofactor is pyrroloquinoline quinone. Requires Ca(2+) as cofactor.

Its subcellular location is the periplasm. It carries out the reaction a primary alcohol + 2 Fe(III)-[cytochrome c] = an aldehyde + 2 Fe(II)-[cytochrome c] + 2 H(+). It catalyses the reaction ethanol + 2 Fe(III)-[cytochrome c] = acetaldehyde + 2 Fe(II)-[cytochrome c] + 2 H(+). The enzyme catalyses ethanol + A = acetaldehyde + AH2. The catalysed reaction is 1-propanol + 2 Fe(III)-[cytochrome c] = propanal + 2 Fe(II)-[cytochrome c] + 2 H(+). The protein operates within alcohol metabolism; ethanol degradation; acetate from ethanol: step 1/2. Its activity is regulated as follows. Enhanced by the presence of ethylamine or NH4(+) ions. Functionally, catalyzes the oxidation of ethanol and other primary alcohols to the corresponding aldehydes, except methanol, which is not a substrate. Uses a specific inducible cytochrome c550, encoded by the adjacent gene in the locus, as electron acceptor. Is a key enzyme of the carbon and energy metabolism during growth of P.putida on ethanol as the sole carbon and energy source. Displays lower activity on secondary alcohols, aldehydes and diols. Is not active with sugar alcohols such as glycerol and D-sorbitol. In vitro, reacts well with phenazine methosulfate (PMS) as an electron acceptor but not with NAD(P), potassium ferricyanide, or molecular oxygen. The protein is Quinoprotein ethanol dehydrogenase of Pseudomonas putida (Arthrobacter siderocapsulatus).